Here is a 102-residue protein sequence, read N- to C-terminus: Integration host factor subunit alpha (102 aa).

Belongs to the bacterial histone-like protein family. As to quaternary structure, heterodimer of an alpha and a beta chain.

Its function is as follows. This protein is one of the two subunits of integration host factor, a specific DNA-binding protein that functions in genetic recombination as well as in transcriptional and translational control. This chain is Integration host factor subunit alpha, found in Paracoccus denitrificans (strain Pd 1222).